We begin with the raw amino-acid sequence, 522 residues long: F-box-like/WD repeat-containing protein TBL1Y (522 aa).

Ser-2 bears the N-acetylserine mark. In terms of domain architecture, LisH spans 4–36 (TSDEVNFLVYRYLQESGFSHSAFTFGIESHISQ). Residues 41-86 (GTLVPPSALISILQKGLQYVEAEISINKDGTVFDSRPIESLSLIVA) enclose the F-box-like domain. Lys-102 carries the N6-acetyllysine modification. Phosphoserine is present on Ser-130. 8 WD repeats span residues 177 to 216 (GHES…NGGS), 233 to 272 (PSNK…ASTL), 274 to 313 (QHKG…AKQQ), 316 to 354 (FHSA…PVKT), 357 to 396 (GHTN…CVHD), 399 to 447 (AHSK…CTHT), 450 to 489 (KHQE…LVHS), and 491 to 521 (QGTG…CVLD). Lys-287 participates in a covalent cross-link: Glycyl lysine isopeptide (Lys-Gly) (interchain with G-Cter in SUMO2).

This sequence belongs to the WD repeat EBI family. In terms of assembly, probable component of the N-Cor repressor complex and some E3 ubiquitin ligase complex. Interacts with NCOR2. As to expression, fetal brain and prostate. Expressed in the cochlear spiral ganglion neurons, and in outer and inner hair cells.

Its subcellular location is the nucleus. In terms of biological role, F-box-like protein involved in the recruitment of the ubiquitin/19S proteasome complex to nuclear receptor-regulated transcription units. Plays an essential role in transcription activation mediated by nuclear receptors. Probably acts as integral component of corepressor complexes that mediates the recruitment of the 19S proteasome complex, leading to the subsequent proteasomal degradation of transcription repressor complexes, thereby allowing cofactor exchange. In Homo sapiens (Human), this protein is F-box-like/WD repeat-containing protein TBL1Y (TBL1Y).